The following is a 203-amino-acid chain: Glycerol-3-phosphate acyltransferase (203 aa).

5 consecutive transmembrane segments (helical) span residues 10–30, 59–79, 87–107, 116–136, and 168–188; these read LLAL…GLLI, PAAA…VILA, AAQI…YLKF, FFGT…AIWL, and LVVL…ENII.

It belongs to the PlsY family. Probably interacts with PlsX.

It localises to the cell inner membrane. It catalyses the reaction an acyl phosphate + sn-glycerol 3-phosphate = a 1-acyl-sn-glycero-3-phosphate + phosphate. It functions in the pathway lipid metabolism; phospholipid metabolism. Catalyzes the transfer of an acyl group from acyl-phosphate (acyl-PO(4)) to glycerol-3-phosphate (G3P) to form lysophosphatidic acid (LPA). This enzyme utilizes acyl-phosphate as fatty acyl donor, but not acyl-CoA or acyl-ACP. The sequence is that of Glycerol-3-phosphate acyltransferase from Dinoroseobacter shibae (strain DSM 16493 / NCIMB 14021 / DFL 12).